A 539-amino-acid chain; its full sequence is MKVTTEKKPRSILELTVELDKQQIEKALDRAARRMSQKYNIPGFRKGKAPRFIVENYFGREALLEEASDDLIQKAFQDALKQEGIEPYAQAHLTDVNLTEAPYRFTVEVPVAPTVVLPDYRAIHVPLEIEEVTDETVNHAMEIRRDRHVVLRALDEPRPAQPGDQLTVQIETFVDGEPLNPRAEGEDIPQSTLVLDPERIVPGLYEALVGVSPNTMVDVTVRMSDDHENERVRGRDVRFVVNVLDVQERLLPEWDELPALENFEGTLDELREKTRNELIEAARKNAEDDVFVEYVRQVIAATTFDLPDALIVREADSILREREAEFERYGISAEQIYAAQGKKRDDLIEELKPVAEERAKRGLVLREIAKAEGLAPDESEIAREVEDIVASMEEERRDSARTLLETELRPFVVAGIVDRKLRRRILAIATGDPSFEQAASPEAASEPESADGGEAQTVDTHIDSAPVDDVSTKQAASPEAASEPESADGGEAQTVDTHINSAPVDDVSTETPIVSQEENGESVENQSVVDVATPEARTE.

The 90-residue stretch at 163–252 (GDQLTVQIET…VLDVQERLLP (90 aa)) folds into the PPIase FKBP-type domain. Composition is skewed to low complexity over residues 434–447 (SFEQ…ASEP) and 475–484 (AASPEAASEP). Residues 434–539 (SFEQAASPEA…DVATPEARTE (106 aa)) form a disordered region. The segment covering 509–528 (TETPIVSQEENGESVENQSV) has biased composition (polar residues).

The protein belongs to the FKBP-type PPIase family. Tig subfamily.

It localises to the cytoplasm. It catalyses the reaction [protein]-peptidylproline (omega=180) = [protein]-peptidylproline (omega=0). In terms of biological role, involved in protein export. Acts as a chaperone by maintaining the newly synthesized protein in an open conformation. Functions as a peptidyl-prolyl cis-trans isomerase. The polypeptide is Trigger factor (Roseiflexus sp. (strain RS-1)).